The following is a 1984-amino-acid chain: Sodium channel protein type 9 subunit alpha (1984 aa).

At 1–125 the chain is on the cytoplasmic side; sequence MAMLPPPGPQ…RRISIKILVH (125 aa). Over residues 26–47 the composition is skewed to basic and acidic residues; it reads RIAEGKTKEPKEEKKDDHDEGP. Residues 26–55 are disordered; sequence RIAEGKTKEPKEEKKDDHDEGPKPSSDLEA. The stretch at 112–408 is one I repeat; it reads FSPLRRISIK…VAMAYEEQNQ (297 aa). Residues 126–145 traverse the membrane as a helical segment; sequence SLFSMLIMCTILTNCIFMTM. Residues 146 to 150 are Extracellular-facing; it reads NNPAE. Residues 151 to 172 traverse the membrane as a helical segment; that stretch reads WTKNVEYTFTGIYTFESLVKIF. Residues 173–185 are Cytoplasmic-facing; the sequence is ARGFCVGEFTFLR. Residues 186 to 204 form a helical membrane-spanning segment; the sequence is DPWNWLDFIVIVFAYLTEF. The Extracellular segment spans residues 205–210; sequence VNLGNV. Asn209 is a glycosylation site (N-linked (GlcNAc...) asparagine). Residues 211 to 227 form a helical membrane-spanning segment; that stretch reads SALRTFRVLRALKTISV. At 228 to 241 the chain is on the cytoplasmic side; that stretch reads IPGLKTIVGALIQS. Residues 242–267 traverse the membrane as a helical segment; sequence VKKLSDVIILTVFCLSVFALIGLQLF. Residues 268–344 are Extracellular-facing; sequence MGHLKHKCLR…PDYGYTSFDT (77 aa). Residues Cys275 and Cys322 are joined by a disulfide bond. Asn281 is a glycosylation site (N-linked (GlcNAc...) asparagine). An intramembrane region (pore-forming) is located at residues 345 to 361; the sequence is FSWAFLALFRLMTQDYW. The Extracellular portion of the chain corresponds to 362-374; the sequence is ENLYQQTLRAAGK. A helical membrane pass occupies residues 375–400; that stretch reads TYMIFFVVVIFLGSFYLINLILAVVA. Residues 401-742 are Cytoplasmic-facing; that stretch reads MAYEEQNQAN…FIYIIVMDPF (342 aa). Over residues 459 to 469 the composition is skewed to low complexity; sequence SSSETSKLSSK. Disordered stretches follow at residues 459 to 517 and 563 to 610; these read SSSE…LGVE and GSET…PPML. Residues 472–484 show a composition bias toward basic residues; that stretch reads KERRNRRKKKNQK. Basic and acidic residues-rich tracts occupy residues 487–508 and 571–583; these read SSGEEKGDDEKLSKSESEESIS and DEHSIFGDNESRR. The II repeat unit spans residues 723 to 986; the sequence is CSPFWIKFKK…EEDTDANNLQ (264 aa). The chain crosses the membrane as a helical span at residues 743–759; it reads VDLAITICIVLNTLFMA. The Extracellular segment spans residues 760–768; it reads MEHHPMTEE. A helical membrane pass occupies residues 769 to 793; it reads FKNVLVVGNLVFTGIFAAEMVLKLI. At 794 to 802 the chain is on the cytoplasmic side; that stretch reads AMDPYEYFQ. Residues 803-819 form a helical membrane-spanning segment; sequence VGWNVFDSLIVTLSLVE. At 820–828 the chain is on the extracellular side; that stretch reads LFLADVEGL. A helical membrane pass occupies residues 829–845; it reads SVLRSFRLLRVFKLAKS. Residues 846 to 862 lie on the Cytoplasmic side of the membrane; it reads WPTLNMLIKIIGNSVGP. The chain crosses the membrane as a helical span at residues 863-885; it reads LGNLTLVLAIIVFIFAVVGMQLF. Topologically, residues 886–912 are extracellular; that stretch reads GKSYKECVCKINDDCSLPRWHMNDFFH. Residues Cys894 and Cys900 are joined by a disulfide bond. An intramembrane region (pore-forming) is located at residues 913–925; it reads SFLIVFRVLCGEW. At 926–937 the chain is on the extracellular side; it reads IETMWDCMEVAG. The cysteines at positions 932 and 941 are disulfide-linked. A helical membrane pass occupies residues 938–964; that stretch reads QAMCLIVYMMVMVIGNLVVLNLFLALL. Residues 965-1184 lie on the Cytoplasmic side of the membrane; it reads LSSFSSDNLS…WWNIRKTCYR (220 aa). Positions 1087 to 1146 are disordered; it reads PIAPGESDLENMNTEELSSDSESEYSKERLNRSSSSECSTVDNALPGEGEEAEAEPVNSD. The segment covering 1118–1128 has biased composition (polar residues); the sequence is RSSSSECSTVD. Residues 1134–1146 are compositionally biased toward acidic residues; the sequence is EGEEAEAEPVNSD. An III repeat occupies 1177–1485; sequence NIRKTCYRIV…KKYYNAMKKL (309 aa). The helical transmembrane segment at 1185–1209 threads the bilayer; sequence IVEHSWFESFIVLMILLSSGALAFE. Over 1210 to 1221 the chain is Extracellular; that stretch reads DIYIEKKKTIKI. The helical transmembrane segment at 1222 to 1247 threads the bilayer; the sequence is ILEYADKIFTYIFILEMLLKWVAYGY. Over 1248–1249 the chain is Cytoplasmic; it reads KT. The chain crosses the membrane as a helical span at residues 1250–1275; the sequence is YFTNAWCWLDFLIVDVSLVTLVANTL. Residues 1276–1284 lie on the Extracellular side of the membrane; it reads GYSDLGPIK. The helical transmembrane segment at 1285-1301 threads the bilayer; that stretch reads SLRTLRALRPLRALSRF. Residues 1302 to 1314 lie on the Cytoplasmic side of the membrane; it reads EGMRVVVNALIGA. The chain crosses the membrane as a helical span at residues 1315–1339; the sequence is IPSIMNVLLVCLIFWLIFSIMGVNL. The Extracellular portion of the chain corresponds to 1340–1391; it reads FAGKFYQCVNTTDDSRFPTKQVSNRSECFALMNGSQNVRWKNLKVNFDNVGL. An intrachain disulfide couples Cys1347 to Cys1367. N-linked (GlcNAc...) asparagine glycosylation is found at Asn1349, Asn1363, and Asn1372. Positions 1392–1402 form an intramembrane region, pore-forming; sequence RYLSLLQVATF. Topologically, residues 1403–1428 are extracellular; it reads KGWMDIMYAAVDSVNVDQQPSYEHNL. Residues 1429 to 1454 form a helical membrane-spanning segment; the sequence is YMYIYFVIFIIFGSFFTLNLFIGVII. The Cytoplasmic portion of the chain corresponds to 1455–1511; that stretch reads DNFNQQKKKLGGQDIFMTEEQKKYYNAMKKLGSKKPQKPIPRPGNKFQGCIFDLVTN. Phosphoserine; by PKC is present on Ser1487. An IV repeat occupies 1494–1792; the sequence is IPRPGNKFQG…WEKFDPDATQ (299 aa). The helical transmembrane segment at 1512–1531 threads the bilayer; it reads QAFDITIMILICLNMVTMMV. Residues 1532–1542 are Extracellular-facing; it reads EKEGQSDYMTD. Residues 1543–1564 form a helical membrane-spanning segment; sequence VLYWINVVFIILFTGECVLKLI. The Cytoplasmic segment spans residues 1565–1573; that stretch reads SLRHYYFTI. The helical transmembrane segment at 1574–1595 threads the bilayer; sequence GWNIFDFVVVILSIVGMFLAEL. Topologically, residues 1596–1604 are extracellular; sequence IETYFVSPT. A helical membrane pass occupies residues 1605–1624; the sequence is LFRVIRLARIGRILRLIKGA. Residues 1625 to 1637 are Cytoplasmic-facing; the sequence is KGIRTLLFALMMS. The chain crosses the membrane as a helical span at residues 1638-1660; the sequence is LPALFNIGLLLFLVMFIYAIFGM. The Extracellular segment spans residues 1661 to 1683; sequence SNFAYVKKEAGINDMFNFETFGN. The pore-forming intramembrane region spans 1684–1696; the sequence is SMICLFQITTSAG. Residues 1697–1730 lie on the Extracellular side of the membrane; that stretch reads WDGLLAPILNSAPPDCDPKKVHPGSSTEGDCGSP. Cysteines 1712 and 1727 form a disulfide. The chain crosses the membrane as a helical span at residues 1731–1756; the sequence is SVGIFYFVSYIIISFLVVVNMYIAVI. The Cytoplasmic segment spans residues 1757 to 1984; sequence LENFSVATEE…KGKDGKETKK (228 aa). One can recognise an IQ domain in the interval 1886-1915; the sequence is EDVSATVIQRAYRRYRLRQNVKNISSIYIK. Residues 1924 to 1984 are disordered; that stretch reads PNKGDIVFDN…KGKDGKETKK (61 aa). Over residues 1933-1956 the composition is skewed to polar residues; the sequence is NVNSSSPEKTDATASTISPPSYDS. Residues 1958–1984 show a composition bias toward basic and acidic residues; the sequence is TKPDKEKYEKDKTEKEDKGKDGKETKK.

It belongs to the sodium channel (TC 1.A.1.10) family. Nav1.7/SCN9A subfamily. In terms of assembly, the Nav1.7 voltage-gated sodium channel consists of an ion-conducting alpha subunit SCN9A which is functional on its own regulated by one or more beta-1 (SCN1B), beta-2 (SCN2B), beta-3 (SCN3B) and beta-4 (SCN4B) subunits. SCN1B and SCN3B are non-covalently associated with SCN9A. SCN2B and SCN4B are disulfide-linked to SCN9A. SCN1B regulates channel inactivation. Interacts with NEDD4 and NEDD4L; regulates Nav1.7 activity most probably through ubiquitination and subsequent endocytosis. Interacts with TMEM233; modulates the gating properties of NaV1.7. Phosphorylation at Ser-1487 by PKC in a highly conserved cytoplasmic loop increases peak sodium currents. In terms of processing, ubiquitinated by NEDD4L; which may promote its endocytosis. Expressed in the sciatic nerve, spinal cord, brainstem, cerebellum and cortex, but not expressed in the lung, skeletal and cardiac muscles, kidney and liver.

It is found in the cell membrane. It localises to the cell projection. Its subcellular location is the neuron projection. The protein localises to the axon. The catalysed reaction is Na(+)(in) = Na(+)(out). Its function is as follows. Pore-forming subunit of Nav1.7, a voltage-gated sodium (Nav) channel that directly mediates the depolarizing phase of action potentials in excitable membranes. Navs, also called VGSCs (voltage-gated sodium channels) or VDSCs (voltage-dependent sodium channels), operate by switching between closed and open conformations depending on the voltage difference across the membrane. In the open conformation they allow Na(+) ions to selectively pass through the pore, along their electrochemical gradient. The influx of Na(+) ions provokes membrane depolarization, initiating the propagation of electrical signals throughout cells and tissues. Nav1.7 plays a crucial role in controlling the excitability and action potential propagation from nociceptor neurons, thereby contributing to the sensory perception of pain. This is Sodium channel protein type 9 subunit alpha from Oryctolagus cuniculus (Rabbit).